The chain runs to 195 residues: Interferon tau-11 (195 aa).

An N-terminal signal peptide occupies residues M1–G23. Disulfide bonds link C24–C122 and C52–C162. An N-linked (GlcNAc...) asparagine glycan is attached at N101.

This sequence belongs to the alpha/beta interferon family. IFN-alphaII subfamily. As to expression, constitutively and exclusively expressed in the mononuclear cells of the extraembryonic trophectoderm.

It is found in the secreted. In terms of biological role, paracrine hormone primarily responsible for maternal recognition of pregnancy. Interacts with endometrial receptors, probably type I interferon receptors, and blocks estrogen receptor expression, preventing the estrogen-induced increase in oxytocin receptor expression in the endometrium. This results in the suppression of the pulsatile endometrial release of the luteolytic hormone prostaglandin F2-alpha, hindering the regression of the corpus luteum (luteolysis) and therefore a return to ovarian cyclicity. This, and a possible direct effect of IFN-tau on prostaglandin synthesis, leads in turn to continued ovarian progesterone secretion, which stimulates the secretion by the endometrium of the nutrients required for the growth of the conceptus. In summary, displays particularly high antiviral and antiproliferative potency concurrently with particular weak cytotoxicity, high antiluteolytic activity and immunomodulatory properties. In contrast with other IFNs, IFN-tau is not virally inducible. The chain is Interferon tau-11 (IFNT11) from Ovis aries (Sheep).